Here is a 591-residue protein sequence, read N- to C-terminus: Probable anion transporter 4, chloroplastic (591 aa).

The segment at 1 to 38 (MAMGAVLSSRTFASPLSSSGKQHPPQNNKCTCSSPPTR) is disordered. The N-terminal 76 residues, 1-76 (MAMGAVLSSR…LSARFHQPVV (76 aa)), are a transit peptide targeting the chloroplast. The span at 8 to 36 (SSRTFASPLSSSGKQHPPQNNKCTCSSPP) shows a compositional bias: polar residues. The next 11 helical transmembrane spans lie at 184 to 204 (VVLLCFFSFLLCNMDRVNMSI), 220 to 240 (VGLIQSSFFWGYLLTQILGGI), 249 to 269 (VVLGFGVVWWSIATVLTPLAA), 271 to 291 (IGLPFLLVMRAFMGIGEGVAM), 313 to 333 (LVYSGMYLGSVTGLAFSPLLI), 336 to 356 (FGWPSVFYAFGSLGSVWFALW), 402 to 422 (VWALIVSHFCHNWGTFILLTW), 440 to 460 (LLCVLPWLTMAIFANIGGWIA), 475 to 495 (KIMQSIGFLGPALFLTLLSKV), 531 to 551 (AGVLLGLSNTAGVLAGVFGTA), and 565 to 585 (VFQVAVVLYIVGTVVWNVFST).

This sequence belongs to the major facilitator superfamily. Sodium/anion cotransporter (TC 2.A.1.14) family.

Its subcellular location is the plastid. It is found in the chloroplast membrane. Functionally, probable anion transporter. This chain is Probable anion transporter 4, chloroplastic (PHT4;4), found in Oryza sativa subsp. japonica (Rice).